Consider the following 468-residue polypeptide: ATP synthase subunit beta (468 aa).

148–155 contributes to the ATP binding site; it reads GGAGVGKT.

Belongs to the ATPase alpha/beta chains family. In terms of assembly, F-type ATPases have 2 components, CF(1) - the catalytic core - and CF(0) - the membrane proton channel. CF(1) has five subunits: alpha(3), beta(3), gamma(1), delta(1), epsilon(1). CF(0) has three main subunits: a(1), b(2) and c(9-12). The alpha and beta chains form an alternating ring which encloses part of the gamma chain. CF(1) is attached to CF(0) by a central stalk formed by the gamma and epsilon chains, while a peripheral stalk is formed by the delta and b chains.

The protein resides in the cell inner membrane. It catalyses the reaction ATP + H2O + 4 H(+)(in) = ADP + phosphate + 5 H(+)(out). Produces ATP from ADP in the presence of a proton gradient across the membrane. The catalytic sites are hosted primarily by the beta subunits. In Stenotrophomonas maltophilia (strain R551-3), this protein is ATP synthase subunit beta.